Reading from the N-terminus, the 370-residue chain is Phosphoserine aminotransferase (370 aa).

At methionine 1 the chain carries N-acetylmethionine. Positions 44 and 45 each coordinate O-phospho-L-serine. Lysine 51 is subject to N6-acetyllysine. Pyridoxal 5'-phosphate is bound by residues glycine 79, cysteine 80, and tryptophan 107. N6-acetyllysine is present on lysine 127. Residues threonine 156, aspartate 176, and glutamine 199 each contribute to the pyridoxal 5'-phosphate site. N6-(pyridoxal phosphate)lysine is present on lysine 200. Residues asparagine 241 and threonine 242 each contribute to the pyridoxal 5'-phosphate site. N6-acetyllysine is present on residues lysine 269, lysine 318, and lysine 323. Phosphoserine is present on serine 331. Lysine 333 carries the post-translational modification N6-acetyllysine. Histidine 335, arginine 336, and arginine 342 together coordinate O-phospho-L-serine.

It belongs to the class-V pyridoxal-phosphate-dependent aminotransferase family. SerC subfamily. In terms of assembly, homodimer. Requires pyridoxal 5'-phosphate as cofactor. In terms of tissue distribution, expressed at high levels in the brain, liver, kidney and pancreas, and very weakly expressed in the thymus, prostate, testis and colon.

It catalyses the reaction O-phospho-L-serine + 2-oxoglutarate = 3-phosphooxypyruvate + L-glutamate. The protein operates within amino-acid biosynthesis; L-serine biosynthesis; L-serine from 3-phospho-D-glycerate: step 2/3. With respect to regulation, phosphoserine transaminase activity is strongly stimulated by increasing the ionic strength. Involved in L-serine biosynthesis via the phosphorylated pathway, a three-step pathway converting the glycolytic intermediate 3-phospho-D-glycerate into L-serine. Catalyzes the second step, that is the pyridoxal 5'-phosphate-dependent transamination of 3-phosphohydroxypyruvate and L-glutamate to O-phosphoserine (OPS) and alpha-ketoglutarate. The sequence is that of Phosphoserine aminotransferase from Homo sapiens (Human).